Consider the following 475-residue polypeptide: Eukaryotic translation initiation factor 2 subunit 3 (475 aa).

The region spanning 38–247 is the tr-type G domain; it reads QATINIGTIG…IVNKIPVPPR (210 aa). A G1 region spans residues 47-54; sequence GHVAHGKS. GTP is bound at residue 50–55; it reads AHGKST. A G2 region spans residues 75 to 79; that stretch reads NITIK. The interval 133–136 is G3; the sequence is DCPG. GTP contacts are provided by residues 189 to 192 and 224 to 226; these read NKID and SAQ. The G4 stretch occupies residues 189 to 192; sequence NKID. The G5 stretch occupies residues 224–226; that stretch reads SAQ. Residues 456-468 form an interacts with CDC123 region; sequence GQIFGGKTITPVL.

Belongs to the TRAFAC class translation factor GTPase superfamily. Classic translation factor GTPase family. EIF2G subfamily. As to quaternary structure, eukaryotic translation initiation factor 2 eIF2 is a heterotrimeric complex composed of an alpha, a beta and a gamma subunit. The factors eIF-1, eIF-2, eIF-3, TIF5/eIF-5 and methionyl-tRNAi form a multifactor complex (MFC) that may bind to the 40S ribosome.

It is found in the cytoplasm. Its subcellular location is the cytosol. It catalyses the reaction GTP + H2O = GDP + phosphate + H(+). Functionally, as a subunit of eukaryotic initiation factor 2 eIF2, involved in the early steps of protein synthesis. In the presence of GTP, eIF-2 forms a ternary complex with initiator tRNA Met-tRNAi and then recruits the 40S ribosomal complex and initiation factors eIF-1, eIF-1A and eIF-3 to form the 43S pre-initiation complex (43S PIC), a step that determines the rate of protein translation. The 43S PIC binds to mRNA and scans downstream to the initiation codon, where it forms a 48S initiation complex by codon-anticodon base pairing. This leads to the displacement of eIF-1 to allow GTPase-activating protein (GAP) eIF-5-mediated hydrolysis of eIF2-bound GTP. Hydrolysis of GTP and release of Pi, which makes GTP hydrolysis irreversible, causes the release of the eIF-2-GDP binary complex from the 40S subunit, an event that is essential for the subsequent joining of the 60S ribosomal subunit to form an elongation-competent 80S ribosome. In order for eIF-2 to recycle and catalyze another round of initiation, the GDP bound to eIF-2 must be exchanged with GTP by way of a reaction catalyzed by GDP-GTP exchange factor (GEF) eIF-2B. The protein is Eukaryotic translation initiation factor 2 subunit 3 of Drosophila melanogaster (Fruit fly).